The sequence spans 546 residues: Chaperonin GroEL (546 aa).

Residues 30–33, K51, 87–91, G415, and D497 contribute to the ATP site; these read TLGP and DGTTT. The tract at residues 527 to 546 is disordered; it reads PKKDSPAPAMPGGGMGGMDF. A compositionally biased stretch (gly residues) spans 537-546; the sequence is PGGGMGGMDF.

The protein belongs to the chaperonin (HSP60) family. Forms a cylinder of 14 subunits composed of two heptameric rings stacked back-to-back. Interacts with the co-chaperonin GroES.

Its subcellular location is the cytoplasm. It carries out the reaction ATP + H2O + a folded polypeptide = ADP + phosphate + an unfolded polypeptide.. Functionally, together with its co-chaperonin GroES, plays an essential role in assisting protein folding. The GroEL-GroES system forms a nano-cage that allows encapsulation of the non-native substrate proteins and provides a physical environment optimized to promote and accelerate protein folding. The sequence is that of Chaperonin GroEL from Methylorubrum populi (strain ATCC BAA-705 / NCIMB 13946 / BJ001) (Methylobacterium populi).